Consider the following 176-residue polypeptide: MIDDDGYRPNVGIVICNRQGQVLWARRYGQHSWQFPQGGINPGESPEQAMYRELYEEVGLGRKDVRILASTRNWLRYKLPKRLVRWDTRPVCIGQKQRWFLLQLLCNEEDINVQHSNTPEFDGWRWVSYWYPVRQVVSFKRDVYRRVMKEFASVVMPMQESVSLPRSSYSYRRKRS.

In terms of domain architecture, Nudix hydrolase spans glycine 6–lysine 149. The Nudix box signature appears at glycine 38–glycine 59.

Belongs to the Nudix hydrolase family. RppH subfamily. A divalent metal cation serves as cofactor.

Its function is as follows. Accelerates the degradation of transcripts by removing pyrophosphate from the 5'-end of triphosphorylated RNA, leading to a more labile monophosphorylated state that can stimulate subsequent ribonuclease cleavage. This is RNA pyrophosphohydrolase from Photorhabdus laumondii subsp. laumondii (strain DSM 15139 / CIP 105565 / TT01) (Photorhabdus luminescens subsp. laumondii).